The primary structure comprises 130 residues: Small ribosomal subunit protein uS8 (130 aa).

The protein belongs to the universal ribosomal protein uS8 family. Part of the 30S ribosomal subunit. Contacts proteins S5 and S12.

In terms of biological role, one of the primary rRNA binding proteins, it binds directly to 16S rRNA central domain where it helps coordinate assembly of the platform of the 30S subunit. The chain is Small ribosomal subunit protein uS8 from Phytoplasma australiense.